The primary structure comprises 408 residues: NADH-quinone oxidoreductase subunit D (408 aa).

This sequence belongs to the complex I 49 kDa subunit family. As to quaternary structure, NDH-1 is composed of 14 different subunits. Subunits NuoB, C, D, E, F, and G constitute the peripheral sector of the complex.

Its subcellular location is the cell inner membrane. The enzyme catalyses a quinone + NADH + 5 H(+)(in) = a quinol + NAD(+) + 4 H(+)(out). In terms of biological role, NDH-1 shuttles electrons from NADH, via FMN and iron-sulfur (Fe-S) centers, to quinones in the respiratory chain. The immediate electron acceptor for the enzyme in this species is believed to be ubiquinone. Couples the redox reaction to proton translocation (for every two electrons transferred, four hydrogen ions are translocated across the cytoplasmic membrane), and thus conserves the redox energy in a proton gradient. This Campylobacter jejuni subsp. doylei (strain ATCC BAA-1458 / RM4099 / 269.97) protein is NADH-quinone oxidoreductase subunit D.